The primary structure comprises 357 residues: UPF0283 membrane protein BOV_0999 (357 aa).

Positions 1–36 (MSDKTPRKPTAFRLEQPARVSAASEQEEPRRPRAVK) are disordered. Positions 27–36 (EEPRRPRAVK) are enriched in basic and acidic residues. The next 2 helical transmembrane spans lie at 78–98 (ILFG…TEDL) and 109–129 (LGWT…AIIL).

This sequence belongs to the UPF0283 family.

It localises to the cell inner membrane. In Brucella ovis (strain ATCC 25840 / 63/290 / NCTC 10512), this protein is UPF0283 membrane protein BOV_0999.